A 593-amino-acid chain; its full sequence is Scarecrow-like protein 1 (593 aa).

2 disordered regions span residues 29–61 (NPKLYTLNENGNNNGVSSAQIFDPDRSKNPCLT) and 188–216 (YQNESEQHQDSPKESSSADSNSHVSSKEV). Residues 35–48 (LNENGNNNGVSSAQ) show a composition bias toward polar residues. Over residues 202–211 (SSSADSNSHV) the composition is skewed to low complexity. In terms of domain architecture, GRAS spans 213-593 (SKEVVSQATP…KSLIVASAWR (381 aa)). The segment at 220-280 (ATPKQILISC…AARMAASGKF (61 aa)) is leucine repeat I (LRI). The tract at residues 299 to 364 (MQVLFEVCPC…GKRPRLRLTG (66 aa)) is VHIID. The VHIID motif lies at 330-334 (VHIID). Positions 380–411 (IIGLRLEQLAEDNGVSFKFKAMPSKTSIVSPS) are leucine repeat II (LRII). Residues 421-515 (LIVNFAFQLH…RQCLARDIVN (95 aa)) form a PFYRE region. The interval 518–593 (ACEGEERIER…KSLIVASAWR (76 aa)) is SAW.

The protein belongs to the GRAS family. As to expression, expressed in seedlings, roots, shoots, leaves, flowers and siliques.

The protein resides in the nucleus. Probable transcription factor involved in plant development. This is Scarecrow-like protein 1 (SCL1) from Arabidopsis thaliana (Mouse-ear cress).